Consider the following 511-residue polypeptide: Bifunctional purine biosynthesis protein PurH (511 aa).

One can recognise an MGS-like domain in the interval Met-1–Val-145.

The protein belongs to the PurH family.

It carries out the reaction (6R)-10-formyltetrahydrofolate + 5-amino-1-(5-phospho-beta-D-ribosyl)imidazole-4-carboxamide = 5-formamido-1-(5-phospho-D-ribosyl)imidazole-4-carboxamide + (6S)-5,6,7,8-tetrahydrofolate. It catalyses the reaction IMP + H2O = 5-formamido-1-(5-phospho-D-ribosyl)imidazole-4-carboxamide. Its pathway is purine metabolism; IMP biosynthesis via de novo pathway; 5-formamido-1-(5-phospho-D-ribosyl)imidazole-4-carboxamide from 5-amino-1-(5-phospho-D-ribosyl)imidazole-4-carboxamide (10-formyl THF route): step 1/1. The protein operates within purine metabolism; IMP biosynthesis via de novo pathway; IMP from 5-formamido-1-(5-phospho-D-ribosyl)imidazole-4-carboxamide: step 1/1. The polypeptide is Bifunctional purine biosynthesis protein PurH (Bacillus thuringiensis subsp. konkukian (strain 97-27)).